Reading from the N-terminus, the 385-residue chain is Initiation-specific alpha-1,6-mannosyltransferase (385 aa).

Topologically, residues 1 to 15 (MLQLREPQMVHKHLK) are cytoplasmic. The helical; Signal-anchor for type II membrane protein transmembrane segment at 16 to 36 (LAVLGIVVIFTTYFIISSLSS) threads the bilayer. Residues 37-385 (PTSTHKTEYN…KDDGMPEMEQ (349 aa)) lie on the Lumenal side of the membrane. A DXD motif motif is present at residues 189–191 (DID).

The protein belongs to the glycosyltransferase 32 family. It depends on Mn(2+) as a cofactor.

It is found in the endoplasmic reticulum membrane. Its subcellular location is the golgi apparatus membrane. It carries out the reaction Transfers an alpha-D-mannosyl residue from GDP-mannose into lipid-linked oligosaccharide, forming an alpha-(1-&gt;6)-D-mannosyl-D-mannose linkage.. Functionally, mannosyltransferase involved in outer chain elongation of asparagine-linked oligosaccharides of the type Man(9)GlcNAc(2). Adds the first alpha-1,6-mannose to the Man(8)GlcNAc(2) and Man(9)GlcNAc(2), but not Man(5)GlcNAc(2), endoplasmic reticulum intermediates. Represents the first enzymatic event required for synthesis of outer chain mannose linkages on yeast secretory proteins. N-glycan outer chain epitopes play a crucial role in the host-fungal interaction, virulence, and host immune response such as interleukin synthesis or phagocytosis by neutrophils. In Candida albicans (strain SC5314 / ATCC MYA-2876) (Yeast), this protein is Initiation-specific alpha-1,6-mannosyltransferase.